The primary structure comprises 270 residues: Phosphatidylglycerol--prolipoprotein diacylglyceryl transferase (270 aa).

A run of 7 helical transmembrane segments spans residues 10-30 (VAVA…LVGI), 56-76 (LIFW…VLFY), 92-112 (WKGG…AWWF), 120-140 (FFQL…AGRI), 175-195 (SQLY…NLYA), 202-222 (MAVS…VEFV), and 237-257 (VTMG…LIWL). R139 lines the a 1,2-diacyl-sn-glycero-3-phospho-(1'-sn-glycerol) pocket.

The protein belongs to the Lgt family.

The protein localises to the cell inner membrane. The catalysed reaction is L-cysteinyl-[prolipoprotein] + a 1,2-diacyl-sn-glycero-3-phospho-(1'-sn-glycerol) = an S-1,2-diacyl-sn-glyceryl-L-cysteinyl-[prolipoprotein] + sn-glycerol 1-phosphate + H(+). The protein operates within protein modification; lipoprotein biosynthesis (diacylglyceryl transfer). Its function is as follows. Catalyzes the transfer of the diacylglyceryl group from phosphatidylglycerol to the sulfhydryl group of the N-terminal cysteine of a prolipoprotein, the first step in the formation of mature lipoproteins. The polypeptide is Phosphatidylglycerol--prolipoprotein diacylglyceryl transferase (Pseudomonas syringae pv. syringae (strain B728a)).